We begin with the raw amino-acid sequence, 557 residues long: Pectinesterase/pectinesterase inhibitor 18 (557 aa).

Positions 1 to 34 (MSNSNQPLLSKPKSLKHKNLCLVLSFVAILGSVA) are cleaved as a signal peptide. Positions 47 to 203 (NNDDSLLTTS…VSRARVALAI (157 aa)) are pectinesterase inhibitor 18. Residues 246 to 543 (NVVVAKDGTG…FTVAKLIQGG (298 aa)) are pectinesterase 18. The substrate site is built by T321 and Q351. D374 (proton donor; for pectinesterase activity) is an active-site residue. Residue D395 is the Nucleophile; for pectinesterase activity of the active site. The substrate site is built by R463 and W465.

In the N-terminal section; belongs to the PMEI family. This sequence in the C-terminal section; belongs to the pectinesterase family. As to expression, expressed in siliques, flowers, floral stems, rosette leaves and roots.

It localises to the secreted. Its subcellular location is the cell wall. It carries out the reaction [(1-&gt;4)-alpha-D-galacturonosyl methyl ester](n) + n H2O = [(1-&gt;4)-alpha-D-galacturonosyl](n) + n methanol + n H(+). It catalyses the reaction Endohydrolysis of the N-glycosidic bond at one specific adenosine on the 28S rRNA.. It participates in glycan metabolism; pectin degradation; 2-dehydro-3-deoxy-D-gluconate from pectin: step 1/5. In terms of biological role, acts in the modification of cell walls via demethylesterification of cell wall pectin. Inhibits the elongation phase of protein synthesis. This chain is Pectinesterase/pectinesterase inhibitor 18 (PME18), found in Arabidopsis thaliana (Mouse-ear cress).